The primary structure comprises 581 residues: Adenine deaminase (581 aa).

The protein belongs to the metallo-dependent hydrolases superfamily. Adenine deaminase family. Requires Mn(2+) as cofactor.

It carries out the reaction adenine + H2O + H(+) = hypoxanthine + NH4(+). The polypeptide is Adenine deaminase (Lysinibacillus sphaericus (strain C3-41)).